The chain runs to 61 residues: Ferredoxin-3 (61 aa).

2 consecutive 4Fe-4S ferredoxin-type domains span residues 2–31 (YKIT…LQDG) and 32–61 (KAVA…VEEN). Residues Cys-11 and Cys-17 each contribute to the [3Fe-4S] cluster site. [4Fe-4S] cluster-binding residues include Cys-21, Cys-41, Cys-44, and Cys-47. Cys-51 lines the [3Fe-4S] cluster pocket.

[3Fe-4S] cluster is required as a cofactor. [4Fe-4S] cluster serves as cofactor.

In terms of biological role, ferredoxins are iron-sulfur proteins that transfer electrons in a wide variety of metabolic reactions. This Desulfocurvibacter africanus (Desulfovibrio africanus) protein is Ferredoxin-3.